Here is a 430-residue protein sequence, read N- to C-terminus: Gamma-glutamyl phosphate reductase (430 aa).

This sequence belongs to the gamma-glutamyl phosphate reductase family.

It is found in the cytoplasm. It catalyses the reaction L-glutamate 5-semialdehyde + phosphate + NADP(+) = L-glutamyl 5-phosphate + NADPH + H(+). It functions in the pathway amino-acid biosynthesis; L-proline biosynthesis; L-glutamate 5-semialdehyde from L-glutamate: step 2/2. In terms of biological role, catalyzes the NADPH-dependent reduction of L-glutamate 5-phosphate into L-glutamate 5-semialdehyde and phosphate. The product spontaneously undergoes cyclization to form 1-pyrroline-5-carboxylate. This chain is Gamma-glutamyl phosphate reductase, found in Rhodopseudomonas palustris (strain TIE-1).